A 99-amino-acid polypeptide reads, in one-letter code: MALTLTDVKRIAHLARLEMADADAEHTLGQLNEFFGLVEQMQAVDTAGIAPLAHPIEQIQEVAQRLRDDAVTEVVNRDDNQRPAPAVQDGLYLVPKVIE.

The protein belongs to the GatC family. Heterotrimer of A, B and C subunits.

The enzyme catalyses L-glutamyl-tRNA(Gln) + L-glutamine + ATP + H2O = L-glutaminyl-tRNA(Gln) + L-glutamate + ADP + phosphate + H(+). It carries out the reaction L-aspartyl-tRNA(Asn) + L-glutamine + ATP + H2O = L-asparaginyl-tRNA(Asn) + L-glutamate + ADP + phosphate + 2 H(+). Functionally, allows the formation of correctly charged Asn-tRNA(Asn) or Gln-tRNA(Gln) through the transamidation of misacylated Asp-tRNA(Asn) or Glu-tRNA(Gln) in organisms which lack either or both of asparaginyl-tRNA or glutaminyl-tRNA synthetases. The reaction takes place in the presence of glutamine and ATP through an activated phospho-Asp-tRNA(Asn) or phospho-Glu-tRNA(Gln). This chain is Aspartyl/glutamyl-tRNA(Asn/Gln) amidotransferase subunit C, found in Burkholderia vietnamiensis (strain G4 / LMG 22486) (Burkholderia cepacia (strain R1808)).